The chain runs to 436 residues: Xaa-Arg dipeptidase (436 aa).

This sequence belongs to the peptidase M20A family.

The enzyme catalyses beta-alanyl-L-lysine + H2O = beta-alanine + L-lysine. The catalysed reaction is beta-alanyl-L-ornithine + H2O = beta-alanine + L-ornithine. It catalyses the reaction N(2)-(4-aminobutanoyl)-L-lysine + H2O = 4-aminobutanoate + L-lysine. It carries out the reaction N(2)-(4-aminobutanoyl)-L-ornithine + H2O = 4-aminobutanoate + L-ornithine. The enzyme catalyses N(2)-(4-aminobutanoyl)-L-arginine + H2O = 4-aminobutanoate + L-arginine. Its function is as follows. Catalyzes the peptide bond hydrolysis in dipeptides having basic amino acids lysine, ornithine or arginine at C-terminus. Postulated to function in a metabolite repair mechanism by eliminating alternate dipeptide by-products formed during carnosine synthesis. This chain is Xaa-Arg dipeptidase, found in Homo sapiens (Human).